We begin with the raw amino-acid sequence, 485 residues long: Ribulose bisphosphate carboxylase large chain (485 aa).

Residues Asn-124 and Thr-174 each contribute to the substrate site. The active-site Proton acceptor is Lys-176. Residue Lys-178 participates in substrate binding. Mg(2+) contacts are provided by Lys-202, Asp-204, and Glu-205. Lys-202 is modified (N6-carboxylysine). His-294 functions as the Proton acceptor in the catalytic mechanism. Substrate-binding residues include Arg-295, His-327, and Ser-379.

This sequence belongs to the RuBisCO large chain family. Type I subfamily. In terms of assembly, heterohexadecamer of 8 large chains and 8 small chains. The cofactor is Mg(2+).

It catalyses the reaction 2 (2R)-3-phosphoglycerate + 2 H(+) = D-ribulose 1,5-bisphosphate + CO2 + H2O. It carries out the reaction D-ribulose 1,5-bisphosphate + O2 = 2-phosphoglycolate + (2R)-3-phosphoglycerate + 2 H(+). Functionally, ruBisCO catalyzes two reactions: the carboxylation of D-ribulose 1,5-bisphosphate, the primary event in carbon dioxide fixation, as well as the oxidative fragmentation of the pentose substrate in the photorespiration process. Both reactions occur simultaneously and in competition at the same active site. This Rhodopseudomonas palustris (strain BisB18) protein is Ribulose bisphosphate carboxylase large chain.